The chain runs to 375 residues: Homoserine O-succinyltransferase (375 aa).

In terms of domain architecture, AB hydrolase-1 spans 48-358 (NAVLVCHALS…PAGHDSFLLD (311 aa)). The Nucleophile role is filled by Ser-154. Arg-224 contributes to the substrate binding site. Catalysis depends on residues Asp-319 and His-352. Asp-353 serves as a coordination point for substrate.

Belongs to the AB hydrolase superfamily. MetX family. Homodimer.

The protein localises to the cytoplasm. The catalysed reaction is L-homoserine + succinyl-CoA = O-succinyl-L-homoserine + CoA. It functions in the pathway amino-acid biosynthesis; L-methionine biosynthesis via de novo pathway; O-succinyl-L-homoserine from L-homoserine: step 1/1. Its function is as follows. Transfers a succinyl group from succinyl-CoA to L-homoserine, forming succinyl-L-homoserine. The sequence is that of Homoserine O-succinyltransferase from Azoarcus sp. (strain BH72).